The chain runs to 169 residues: Cell cycle link protein (169 aa).

Positions 9-22 (LPEELREKIVHDHL) are binding to host SKP1 protein. The LXCXE motif, interaction with host RBR motif lies at 110–114 (LSCRE).

It belongs to the nanovirus Clink protein family. Interacts with host SKP1. Interacts (via LXCXE domain) with host retinoblastoma-related protein 1 (RBR1). Interacts (via LXCXE domain) with retinoblastoma-related proteins (RBR).

In terms of biological role, interacts with and disrupts the function of host retinoblastoma-related proteins RBR, which are key regulators of the cell cycle. Induces transcriptional activation of E2F-regulated S-phase and G2/M-phase-specific genes. Inactivation of the ability of RBR to arrest the cell cycle leads to the stimulation of viral DNA replication. In Faba bean necrotic yellows virus (isolate Egyptian EV1-93) (FBNYV), this protein is Cell cycle link protein (DNA-C).